The following is an 86-amino-acid chain: Cytochrome c oxidase subunit 12, mitochondrial (86 aa).

A CHCH domain is found at 30–73 (TKHCFQSYIDYFRCIKAKGEDFVPCKQFWHAYQSLCPMEWVERW). Positions 33-43 (CFQSYIDYFRC) match the Cx9C motif motif. 2 disulfide bridges follow: C33-C65 and C43-C54. Positions 54–65 (CKQFWHAYQSLC) match the Cx10C motif motif.

This sequence belongs to the cytochrome c oxidase subunit 6B family. As to quaternary structure, component of the cytochrome c oxidase (complex IV, CIV), a multisubunit enzyme composed of a catalytic core of 3 subunits and several supernumerary subunits. The complex exists as a monomer or a dimer and forms supercomplexes (SCs) in the inner mitochondrial membrane with ubiquinol-cytochrome c oxidoreductase (cytochrome b-c1 complex, complex III, CIII).

The protein localises to the mitochondrion inner membrane. It participates in energy metabolism; oxidative phosphorylation. In terms of biological role, component of the cytochrome c oxidase, the last enzyme in the mitochondrial electron transport chain which drives oxidative phosphorylation. The respiratory chain contains 3 multisubunit complexes succinate dehydrogenase (complex II, CII), ubiquinol-cytochrome c oxidoreductase (cytochrome b-c1 complex, complex III, CIII) and cytochrome c oxidase (complex IV, CIV), that cooperate to transfer electrons derived from NADH and succinate to molecular oxygen, creating an electrochemical gradient over the inner membrane that drives transmembrane transport and the ATP synthase. Cytochrome c oxidase is the component of the respiratory chain that catalyzes the reduction of oxygen to water. Electrons originating from reduced cytochrome c in the intermembrane space (IMS) are transferred via the dinuclear copper A center (CU(A)) of subunit 2 and heme A of subunit 1 to the active site in subunit 1, a binuclear center (BNC) formed by heme A3 and copper B (CU(B)). The BNC reduces molecular oxygen to 2 water molecules using 4 electrons from cytochrome c in the IMS and 4 protons from the mitochondrial matrix. The protein is Cytochrome c oxidase subunit 12, mitochondrial (cox12) of Schizosaccharomyces pombe (strain 972 / ATCC 24843) (Fission yeast).